Reading from the N-terminus, the 337-residue chain is MDKMRILKESRPEIIVGGKYRVIRKIGSGSFGDIYLGMSIQSGEEVAIKMESAHARHPQLLYEAKLYRILSGGVGFPRIRHHGKEKNFNTLVMDLLGPSLEDLFNFCTRHFTIKTVLMLVDQMIGRLEYIHLKCFIHRDIKPDNFLMGIGRHCNKLFLIDFGLAKKFRDPHTRHHIVYREDKNLTGTARYASINAHLGIEQSRRDDMESLGYVMMYFNRGVLPWQGMKANTKQQKYEKISEKKMSTPIEVLCKGSPAEFSMYLNYCRSLRFEEQPDYMYLRQLFRILFRTLNHQYDYIYDWTMLKQKTHQGQPNPAILLEQLDKDKEKQNGKPLIAD.

The region spanning 20–288 (YRVIRKIGSG…YLRQLFRILF (269 aa)) is the Protein kinase domain. Residues 26-34 (IGSGSFGDI) and K49 each bind ATP. D139 serves as the catalytic Proton acceptor.

This sequence belongs to the protein kinase superfamily. CK1 Ser/Thr protein kinase family. Casein kinase I subfamily. In terms of assembly, interacts with cos. It depends on Mg(2+) as a cofactor. In terms of processing, phosphorylated. The dephosphorylated kinase is active in the cytoplasm while the active kinase in the nucleus is phosphorylated.

The protein resides in the cytoplasm. The protein localises to the nucleus. It carries out the reaction L-seryl-[protein] + ATP = O-phospho-L-seryl-[protein] + ADP + H(+). The enzyme catalyses L-threonyl-[protein] + ATP = O-phospho-L-threonyl-[protein] + ADP + H(+). Activity increases following DNA damage. Functionally, casein kinases are operationally defined by their preferential utilization of acidic proteins such as caseins as substrates. Can phosphorylate a large number of proteins. Negative regulator of wg signaling. Phosphorylates arm directly or indirectly and stimulates its degradation which prevents inappropriate wg signaling. Phosphorylates smo which promotes its accumulation at the cell surface and its signaling activity in response to hh. Together with dco, regulates proteolytic processing of ci by phosphorylating it, which promotes its binding to slmb, the F-box recognition component of the SCF(slmb) E3 ubiquitin-protein ligase required for ci processing. Inhibits condensin II interphase activity by promoting degradation of the Cap-H2 regulatory subunit and limiting the levels of chromatin-bound Cap-H2 which regulates interphase chromosome organization. This is Casein kinase I isoform alpha (CkIalpha) from Drosophila melanogaster (Fruit fly).